The following is a 240-amino-acid chain: Uridylate kinase (240 aa).

12 to 15 contacts ATP; the sequence is KLSG. Positions 20–25 are involved in allosteric activation by GTP; the sequence is GEQGFG. Position 54 (G54) interacts with UMP. Residues G55 and R59 each coordinate ATP. UMP is bound by residues D74 and 135–142; that span reads TGNPYFST. ATP-binding residues include N163, Y169, and D172.

It belongs to the UMP kinase family. As to quaternary structure, homohexamer.

It is found in the cytoplasm. It carries out the reaction UMP + ATP = UDP + ADP. Its pathway is pyrimidine metabolism; CTP biosynthesis via de novo pathway; UDP from UMP (UMPK route): step 1/1. With respect to regulation, allosterically activated by GTP. Inhibited by UTP. Functionally, catalyzes the reversible phosphorylation of UMP to UDP. The polypeptide is Uridylate kinase (Bacillus anthracis).